A 265-amino-acid chain; its full sequence is MPLPVALQTRLAKRGILKHLEPEPEEEIIAEDYDDDPVDYEATRLEGLPPSWYKVFDPSCGLPYYWNADTDLVSWLSPHDPNSVVTKSAKKLRSSNADAEEKLDRSHDKSDRGHDKSDRSHEKPDRGHDKSDRGHDKSDRDRERGYDKVDRERERDRERDRDRGYDKADREEGKERRHHRREELAPYPKSKKAVSRKDEELDPMDPSSYSDAPRGTWSTGLPKRNEAKTGADTTAAGPLFQQRPYPSPGAVLRANAEASRTKQQD.

Residues 46-80 (EGLPPSWYKVFDPSCGLPYYWNADTDLVSWLSPHD) enclose the WW domain. A Phosphoserine modification is found at Ser-94. The segment at 94–265 (SSNADAEEKL…AEASRTKQQD (172 aa)) is disordered. A compositionally biased stretch (basic and acidic residues) spans 99-175 (AEEKLDRSHD…DKADREEGKE (77 aa)). Tandem repeats lie at residues 104 to 110 (DRSHDKS), 111 to 117 (DRGHDKS), 118 to 124 (DRSHEKP), 125 to 131 (DRGHDKS), 132 to 138 (DRGHDKS), 139 to 140 (DR), 141 to 142 (DR), 143 to 144 (ER), 150 to 151 (DR), 152 to 153 (ER), 154 to 155 (ER), 156 to 157 (DR), 158 to 159 (ER), 160 to 161 (DR), and 162 to 163 (DR). The 5 X 7 AA approximate tandem repeats of D-R-[SG]-H-D-K-S stretch occupies residues 104–138 (DRSHDKSDRGHDKSDRSHEKPDRGHDKSDRGHDKS). Positions 139–144 (DRDRER) are 3 X 2 AA tandem repeats of [DE]-R. The segment at 150-163 (DRERERDRERDRDR) is 7 X 2 AA tandem repeats of [DE]-R. Positions 245 to 255 (YPSPGAVLRAN) are important for interaction with TXNL4A. Position 247 is a phosphoserine (Ser-247).

Interacts with POU3F2/Brn-2, ATXN1, TXNL4A, HTT and AR. Interaction with ATXN1 correlates positively with the length of the polyglutamine tract. Interacts with RNA polymerase II large subunit in a phosphorylation-dependent manner. Forms a ternary complex with ATXN1 mutant and phosphorylated RNA polymerase II. Interacts (via C-terminus) with TXNL4A and CD2BP2. Interacts (via WW domain) with ATN1 and SF3B1, and may interact with additional splice factors. Interacts (via WW domain) with WBP11; Leading to reduce interaction between PQBP1 and TXNL4A. Interacts with CAPRIN1. Interacts with DDX1. Interacts with SFPQ. Interacts with KHSRP.

The protein resides in the nucleus. The protein localises to the nucleus speckle. It is found in the cytoplasmic granule. Its function is as follows. Intrinsically disordered protein that acts as a scaffold, and which is involved in different processes, such as pre-mRNA splicing, transcription regulation, innate immunity and neuron development. Interacts with splicing-related factors via the intrinsically disordered region and regulates alternative splicing of target pre-mRNA species. May suppress the ability of POU3F2 to transactivate the DRD1 gene in a POU3F2 dependent manner. Can activate transcription directly or via association with the transcription machinery. May be involved in ATXN1 mutant-induced cell death. The interaction with ATXN1 mutant reduces levels of phosphorylated RNA polymerase II large subunit. Involved in the assembly of cytoplasmic stress granule, possibly by participating in the transport of neuronal RNA granules. Also acts as an innate immune sensor of infection by retroviruses, by detecting the presence of reverse-transcribed DNA in the cytosol. Directly binds retroviral reverse-transcribed DNA in the cytosol and interacts with CGAS, leading to activate the cGAS-STING signaling pathway, triggering type-I interferon production. The protein is Polyglutamine-binding protein 1 (PQBP1) of Pongo pygmaeus (Bornean orangutan).